The sequence spans 308 residues: 4-hydroxy-tetrahydrodipicolinate synthase (308 aa).

Thr53 is a binding site for pyruvate. Tyr141 acts as the Proton donor/acceptor in catalysis. Lys169 serves as the catalytic Schiff-base intermediate with substrate. Val209 is a pyruvate binding site.

Belongs to the DapA family. Homotetramer; dimer of dimers.

It is found in the cytoplasm. It carries out the reaction L-aspartate 4-semialdehyde + pyruvate = (2S,4S)-4-hydroxy-2,3,4,5-tetrahydrodipicolinate + H2O + H(+). It functions in the pathway amino-acid biosynthesis; L-lysine biosynthesis via DAP pathway; (S)-tetrahydrodipicolinate from L-aspartate: step 3/4. Functionally, catalyzes the condensation of (S)-aspartate-beta-semialdehyde [(S)-ASA] and pyruvate to 4-hydroxy-tetrahydrodipicolinate (HTPA). This Acidothermus cellulolyticus (strain ATCC 43068 / DSM 8971 / 11B) protein is 4-hydroxy-tetrahydrodipicolinate synthase.